A 472-amino-acid chain; its full sequence is Aspartyl/glutamyl-tRNA(Asn/Gln) amidotransferase subunit B (472 aa).

It belongs to the GatB/GatE family. GatB subfamily. In terms of assembly, heterotrimer of A, B and C subunits.

It catalyses the reaction L-glutamyl-tRNA(Gln) + L-glutamine + ATP + H2O = L-glutaminyl-tRNA(Gln) + L-glutamate + ADP + phosphate + H(+). The enzyme catalyses L-aspartyl-tRNA(Asn) + L-glutamine + ATP + H2O = L-asparaginyl-tRNA(Asn) + L-glutamate + ADP + phosphate + 2 H(+). Functionally, allows the formation of correctly charged Asn-tRNA(Asn) or Gln-tRNA(Gln) through the transamidation of misacylated Asp-tRNA(Asn) or Glu-tRNA(Gln) in organisms which lack either or both of asparaginyl-tRNA or glutaminyl-tRNA synthetases. The reaction takes place in the presence of glutamine and ATP through an activated phospho-Asp-tRNA(Asn) or phospho-Glu-tRNA(Gln). In Campylobacter jejuni subsp. jejuni serotype O:23/36 (strain 81-176), this protein is Aspartyl/glutamyl-tRNA(Asn/Gln) amidotransferase subunit B.